We begin with the raw amino-acid sequence, 280 residues long: Maltodextrin transport system permease protein MalD (280 aa).

6 helical membrane-spanning segments follow: residues 15 to 35 (LTYLYLIGLSIVIIYPLLITI), 77 to 97 (LIIALITMAVQTSIIVLAGYA), 110 to 130 (LVFFLIIQMVPTMAALTAFFV), 142 to 162 (WFLIFLYVGGGIPMNAWLMKG), 200 to 220 (VQALWAFMGPFGDYILSSFLL), and 244 to 264 (IAYFSAGAILIALPICILFFF). The region spanning 73–265 (YLNTLIIALI…LPICILFFFL (193 aa)) is the ABC transmembrane type-1 domain.

This sequence belongs to the binding-protein-dependent transport system permease family. MalFG subfamily.

The protein localises to the cell membrane. In terms of biological role, part of the binding-protein-dependent transport system for maltodextrin; probably responsible for the translocation of the substrate across the membrane. The protein is Maltodextrin transport system permease protein MalD (malD) of Streptococcus pneumoniae (strain ATCC BAA-255 / R6).